Reading from the N-terminus, the 613-residue chain is Chitin synthase 8 (613 aa).

The disordered stretch occupies residues M1–P73. N17 is a glycosylation site (N-linked (GlcNAc...) asparagine). The span at L18–T27 shows a compositional bias: polar residues. The span at E61–P73 shows a compositional bias: pro residues. The next 2 membrane-spanning stretches (helical) occupy residues Y119 to Y139 and Y142 to I162. Residues N312, N421, and N471 are each glycosylated (N-linked (GlcNAc...) asparagine). A run of 2 helical transmembrane segments spans residues V556–L576 and I583–A602.

Belongs to the chitin synthase family.

The protein localises to the cell membrane. It catalyses the reaction [(1-&gt;4)-N-acetyl-beta-D-glucosaminyl](n) + UDP-N-acetyl-alpha-D-glucosamine = [(1-&gt;4)-N-acetyl-beta-D-glucosaminyl](n+1) + UDP + H(+). In terms of biological role, polymerizes chitin, a structural polymer of the cell wall and septum, by transferring the sugar moiety of UDP-GlcNAc to the non-reducing end of the growing chitin polymer. Plays a role in cell wall integrity. Plays a key role in pathogenicity. Likely contributes to post-penetration virulence. This is Chitin synthase 8 from Verticillium dahliae (strain VdLs.17 / ATCC MYA-4575 / FGSC 10137) (Verticillium wilt).